A 459-amino-acid polypeptide reads, in one-letter code: MVQKRTAELQGFHRSFKGQNPFELAFSLDLAQHRDSDFSPQCEARPDMPSSQPIDIPDAKKRGRKKKRCRATDSFSGRFEDVYQLQEDVLGEGAHARVQTCVNLITNQEYAVKIIEKQLGHIRSRVFREVEMLYQCQGHRNVLELIEFFEEEDRFYLVFEKMRGGSILSHIHRRRHFNELEASVVVQDVASALDFLHNKGIAHRDLKPENILCEHPNQVSPVKICDFDLGSGIKLNGDCSPISTPELLTPCGSAEYMAPEVVEAFSEEASIYDKRCDLWSLGVILYILLSGYPPFVGHCGSDCGWDRGEACPACQNMLFESIQEGKYEFPDKDWSHISFAAKDLISKLLVRDAKQRLSAAQVLQHPWVQGCAPENTLPTPLVLQRNSCAKDLTSFAAEAIAMNRQLAQCEEDAGQDQPVVIRATSRCLQLSPPSQSKLAQRRQRASLSATPVVLVGDRA.

The tract at residues 37–67 (DFSPQCEARPDMPSSQPIDIPDAKKRGRKKK) is disordered. A Nuclear localization signal motif is present at residues 60 to 66 (KKRGRKK). Ser-74 bears the Phosphoserine mark. Residues 84-368 (QLQEDVLGEG…AAQVLQHPWV (285 aa)) enclose the Protein kinase domain. ATP contacts are provided by residues 90–98 (LGEGAHARV) and Lys-113. 160–162 (EKM) lines the staurosporine pocket. The Proton acceptor role is filled by Asp-205. Staurosporine is bound at residue Glu-209. Phosphothreonine occurs at positions 244 and 249. The Zn(2+) site is built by Cys-299, Cys-311, and Cys-314. At Thr-379 the chain carries Phosphothreonine. A phosphoserine mark is found at Ser-431 and Ser-434. An MAP kinase binding motif is present at residues 438-442 (LAQRR). The residue at position 446 (Ser-446) is a Phosphoserine. Thr-450 carries the post-translational modification Phosphothreonine.

Belongs to the protein kinase superfamily. CAMK Ser/Thr protein kinase family. Interacts with ESR2 and EIF4E in the nucleus. Monomer. Interacts with the C-terminal regions of EIF4G1 and EIF4G2; this interaction is promoted when MAPK pathways are repressed but repressed upon ERK proteins activation. Also binds to dephosphorylated MAPK3/ERK1 and MAPK1/ERK2. Interaction with phosphorylated MAPK3/ERK1 and MAPK1/ERK2 protects it from dephosphorylation and inactivation. Requires Mg(2+) as cofactor. Zn(2+) serves as cofactor. Dual phosphorylation of Thr-244 and Thr-249 activates the kinase. Phosphorylation of Thr-379 activates the kinase. Phosphorylated upon arsenic trioxide As(2)O(3) treatment. Phosphorylated by MAPK1/ERK2, MAPK11 and MAPK14. Dephosphorylated by PP2A. Ubiquitously expressed in all tissues examined, with high levels in skeletal muscle and low levels in brain.

The protein localises to the cytoplasm. It localises to the nucleus. It is found in the PML body. It carries out the reaction L-seryl-[protein] + ATP = O-phospho-L-seryl-[protein] + ADP + H(+). It catalyses the reaction L-threonyl-[protein] + ATP = O-phospho-L-threonyl-[protein] + ADP + H(+). With respect to regulation, inhibited by CGP57380 and staurosporine. Serine/threonine-protein kinase that phosphorylates SFPQ/PSF, HNRNPA1 and EIF4E. May play a role in the response to environmental stress and cytokines. Appears to regulate translation by phosphorylating EIF4E, thus increasing the affinity of this protein for the 7-methylguanosine-containing mRNA cap. Required for mediating PP2A-inhibition-induced EIF4E phosphorylation. Triggers EIF4E shuttling from cytoplasm to nucleus. Enhances the formation of EIF4F complex in pachytene spermatocytes, thus promoting mRNA translation during spermatogenesis. Displays a high basal kinase activity. Acts as a mediator of the suppressive effects of IFNgamma on hematopoiesis. Negative regulator for signals that control generation of arsenic trioxide As(2)O(3)-dependent apoptosis and anti-leukemic responses. Involved in anti-apoptotic signaling in response to serum withdrawal. In Mus musculus (Mouse), this protein is MAP kinase-interacting serine/threonine-protein kinase 2 (Mknk2).